A 463-amino-acid chain; its full sequence is Peptidylprolyl isomerase cyp7 (463 aa).

A PPIase cyclophilin-type domain is found at 11–166 (ATGTVILKTT…FPPKIISTEV (156 aa)). Residues 224–275 (VKKPLRQKTPVSRSSDTTTELSKDLISSSSSIHSTYSSAQTGLTSAKVSSDE) are disordered. Polar residues predominate over residues 232–243 (TPVSRSSDTTTE). Residues 250–261 (SSSSSIHSTYSS) show a composition bias toward low complexity. The span at 262-271 (AQTGLTSAKV) shows a compositional bias: polar residues.

This sequence belongs to the cyclophilin-type PPIase family. CWC27 subfamily. In terms of assembly, belongs to the 40S cdc5-associated complex (or cwf complex), a spliceosome sub-complex reminiscent of a late-stage spliceosome composed of the U2, U5 and U6 snRNAs and at least brr2, cdc5, cwf2/prp3, cwf3/syf1, cwf4/syf3, cwf5/ecm2, spp42/cwf6, cwf7/spf27, cwf8, cwf9, cwf10, cwf11, cwf12, prp45/cwf13, cwf14, cwf15, cwf16, cwf17, cwf18, cwf19, cwf20, cwf21, cwf22, cwf23, cwf24, cwf25, cwf26, cyp7/cwf27, cwf28, cwf29/ist3, lea1, msl1, prp5/cwf1, prp10, prp12/sap130, prp17, prp22, sap61, sap62, sap114, sap145, slu7, smb1, smd1, smd3, smf1, smg1 and syf2.

It is found in the cytoplasm. It localises to the nucleus. The enzyme catalyses [protein]-peptidylproline (omega=180) = [protein]-peptidylproline (omega=0). In terms of biological role, PPIases accelerate the folding of proteins. Catalyzes the cis-trans isomerization of proline imidic peptide bonds in oligopeptides. Involved in pre-mRNA splicing. In Schizosaccharomyces pombe (strain 972 / ATCC 24843) (Fission yeast), this protein is Peptidylprolyl isomerase cyp7 (cyp7).